Here is a 445-residue protein sequence, read N- to C-terminus: Phosphoglucosamine mutase (445 aa).

The Phosphoserine intermediate role is filled by S102. The Mg(2+) site is built by S102, D241, D243, and D245. S102 bears the Phosphoserine mark.

This sequence belongs to the phosphohexose mutase family. Mg(2+) serves as cofactor. Post-translationally, activated by phosphorylation.

The enzyme catalyses alpha-D-glucosamine 1-phosphate = D-glucosamine 6-phosphate. Its function is as follows. Catalyzes the conversion of glucosamine-6-phosphate to glucosamine-1-phosphate. This chain is Phosphoglucosamine mutase, found in Proteus mirabilis (strain HI4320).